A 943-amino-acid polypeptide reads, in one-letter code: MTDYKATLNLPDTAFPMKAGLPQREPQTLQRWDSIGLYQKLREIGKDRPKFVLHDGPPYANGNIHIGHAVNKILKDMILRSKTLAGFDAPYVPGWDCHGLPIEHKVEVTHGKNLSADRTRELCRAYASEQIEGQKSEFIRLGVLGDWSNPYLTMNFANEAGEIRALAEMVKGGFVFKGLKPVNWCFDCGSALAEAEVEYQDKKSSTIDVAFLIADEAKLAAAFGLPALGKPASIVIWTTTPWTIPANQALNVHPEFEYALVDVGDKLLVLAAELVESCLARYKLEGTVIATTTGQALELINFRHPFYDRLSPVYLADYVELGAGTGIVHSSPAYGVDDFNICKQYGLSNDDIISPVQSNGVYVESLEFFGGQFIFKANQNIIDKLVEVGSLMDTETISHSYMHCWRHKSPLIYRATAQWFVGMDKQPESGETLRKRAVKAIEDTEFVPAWGQARLHSMIANRPDWCISRQRNWGVPIPFFLHKESGDLHPRTVELMEEVAQRVEKEGIEAWFKLDASELLGDEAAKYDKISDTLDVWFDSGTTHWHVLRGSHPMGHESGPRADLYLEGSDQHRGWFHSSLLTGCMLDDHAPYRELLTHGFVVDENGRKMSKSLNNVVAPQKVNDSLGADIMRLWVSATDYSGEMAVSDQILQRSADAYRRIRNTARFLLSNLSGFNPATDILPAEEMLALDRWAVDRTLLLQRELQEHYGEYRFWNVYSKIHNFCVQELGGFYLDIIKDRQYTTAADSTARRSCQTALFHISEALVRWITPILAFTADELWQFLPGERNESVMLNTWYEGLTEMPADFEMDRAYWERIMAVKTSVNKEMENLRAAKAIGGNLQAEVTLYAEDSLIADLSKLSNELRFVLITSTASVAPLVSAPADAVVTEVAGLKLKVLKSSHAKCARCWHHREDVGVNPEHPEICGRCVDNISGAGEVRHYA.

Residues 58 to 68 carry the 'HIGH' region motif; sequence PYANGNIHIGH. Glu567 lines the L-isoleucyl-5'-AMP pocket. The 'KMSKS' region signature appears at 608 to 612; sequence KMSKS. Lys611 is an ATP binding site. The Zn(2+) site is built by Cys906, Cys909, Cys926, and Cys929.

This sequence belongs to the class-I aminoacyl-tRNA synthetase family. IleS type 1 subfamily. As to quaternary structure, monomer. It depends on Zn(2+) as a cofactor.

The protein localises to the cytoplasm. It catalyses the reaction tRNA(Ile) + L-isoleucine + ATP = L-isoleucyl-tRNA(Ile) + AMP + diphosphate. Its function is as follows. Catalyzes the attachment of isoleucine to tRNA(Ile). As IleRS can inadvertently accommodate and process structurally similar amino acids such as valine, to avoid such errors it has two additional distinct tRNA(Ile)-dependent editing activities. One activity is designated as 'pretransfer' editing and involves the hydrolysis of activated Val-AMP. The other activity is designated 'posttransfer' editing and involves deacylation of mischarged Val-tRNA(Ile). This is Isoleucine--tRNA ligase from Pseudomonas savastanoi pv. phaseolicola (strain 1448A / Race 6) (Pseudomonas syringae pv. phaseolicola (strain 1448A / Race 6)).